Reading from the N-terminus, the 93-residue chain is Small integral membrane protein 41 (93 aa).

A helical transmembrane segment spans residues 38–58 (VVLGVLSLLVLCGVLFLGGGL). The segment covering 71-80 (REQRASREPE) has biased composition (basic and acidic residues). The tract at residues 71 to 93 (REQRASREPEPGSASGEDGDDDS) is disordered.

The protein resides in the membrane. The sequence is that of Small integral membrane protein 41 from Homo sapiens (Human).